We begin with the raw amino-acid sequence, 184 residues long: Large ribosomal subunit protein uL6 (184 aa).

This sequence belongs to the universal ribosomal protein uL6 family. As to quaternary structure, part of the 50S ribosomal subunit.

Its function is as follows. This protein binds to the 23S rRNA, and is important in its secondary structure. It is located near the subunit interface in the base of the L7/L12 stalk, and near the tRNA binding site of the peptidyltransferase center. This chain is Large ribosomal subunit protein uL6, found in Onion yellows phytoplasma (strain OY-M).